The following is a 242-amino-acid chain: ATP synthase subunit a (242 aa).

Transmembrane regions (helical) follow at residues 29 to 49, 84 to 104, 114 to 134, 140 to 160, 189 to 209, and 210 to 230; these read SSIYMLLASILALTYFYLAFY, FIPLVFSLFIFILFCNLLGMT, IIVTFTLAILVFLTVTIVGFV, FLTLFLPHGTPLWLAPLMIVI, VIAGFTVSLMIYLKFLPIPLM, and VILIGFEIFVAILQAYIFTIL.

It belongs to the ATPase A chain family. As to quaternary structure, F-type ATPases have 2 components, CF(1) - the catalytic core - and CF(0) - the membrane proton channel. CF(1) has five subunits: alpha(3), beta(3), gamma(1), delta(1), epsilon(1). CF(0) has three main subunits: a(1), b(2) and c(9-12). The alpha and beta chains form an alternating ring which encloses part of the gamma chain. CF(1) is attached to CF(0) by a central stalk formed by the gamma and epsilon chains, while a peripheral stalk is formed by the delta and b chains.

It is found in the cell inner membrane. Functionally, key component of the proton channel; it plays a direct role in the translocation of protons across the membrane. This Rickettsia felis (strain ATCC VR-1525 / URRWXCal2) (Rickettsia azadi) protein is ATP synthase subunit a.